A 129-amino-acid polypeptide reads, in one-letter code: Small ribosomal subunit protein uS11 (129 aa).

Belongs to the universal ribosomal protein uS11 family. In terms of assembly, part of the 30S ribosomal subunit. Interacts with proteins S7 and S18. Binds to IF-3.

Functionally, located on the platform of the 30S subunit, it bridges several disparate RNA helices of the 16S rRNA. Forms part of the Shine-Dalgarno cleft in the 70S ribosome. This is Small ribosomal subunit protein uS11 from Beijerinckia indica subsp. indica (strain ATCC 9039 / DSM 1715 / NCIMB 8712).